The following is a 480-amino-acid chain: MQSSYFKNGILPIINRFYTKQIHFVGIGGIGMCGLAMLLLAQGYCITGSDIAQNDMIRSLLKLGIKIFFGHRDSNINQEINIVVISSAIDINNPEVQQAKRLKIPVIHRVKILSELMRYKYGIAIAGTHGKTTTVSMLTNIYVEAGLDPTFVNGGIIRSQGVSARLGYGNDFIAESDESDKSFLRLCPVVAVITNIDTDHMNTYHQNFEYLQEVFIKFLDKLPMYGYAVVCIDDPVVRKILPRINRKIITYGFSKDATLCIVKYYQYREKSNFTILIKNNKELQVVLNTPGYHNALNAAASIAVAIEEGIRDTVILKSMSNFTGTNRRFEFLGNYPLNIINGRVGKVMVIDDYGHHPAELRSTIIAIRTGWSDHRLVMVFQPHRFTRTHELYDNFVRVLSTVDVLLMLDIYSAGEQPIMGINAQSLCDSILKYAKVQPIFVQNECFLLKFLMNLLRDKDLLLIQGAGTISEIVKALFIKR.

ATP is bound at residue 127 to 133; that stretch reads GTHGKTT.

This sequence belongs to the MurCDEF family.

It is found in the cytoplasm. The enzyme catalyses UDP-N-acetyl-alpha-D-muramate + L-alanine + ATP = UDP-N-acetyl-alpha-D-muramoyl-L-alanine + ADP + phosphate + H(+). It participates in cell wall biogenesis; peptidoglycan biosynthesis. Its function is as follows. Cell wall formation. The sequence is that of UDP-N-acetylmuramate--L-alanine ligase from Blochmanniella floridana.